The following is an 81-amino-acid chain: Probable small nuclear ribonucleoprotein G (81 aa).

Residues 5–76 (GQPPALKKYM…VVTVEALEPV (72 aa)) enclose the Sm domain.

Belongs to the snRNP Sm proteins family.

It is found in the nucleus. In terms of biological role, probable common Sm protein, is found in U1 and U2 snRNPs and may be part of the spliceosome. The sequence is that of Probable small nuclear ribonucleoprotein G (C29) from Medicago sativa (Alfalfa).